Consider the following 177-residue polypeptide: Phycoerythrin beta subunit (177 aa).

(2R,3E)-phycoerythrobilin-binding residues include Tyr-18, Lys-28, Asn-35, and Asp-39. 3 residues coordinate 15,16-dihydrobiliverdin: Cys-50, Asp-54, and Cys-61. Residues Cys-82, Arg-84, and Asp-85 each coordinate (2R,3E)-phycoerythrobilin. Arg-129 is a binding site for 15,16-dihydrobiliverdin. Asn-144 lines the (2R,3E)-phycoerythrobilin pocket. The 15,16-dihydrobiliverdin site is built by Gln-148 and Lys-149. The (2R,3E)-phycoerythrobilin site is built by Pro-154, Gly-156, and Cys-158.

The protein belongs to the phycobiliprotein family. As to quaternary structure, heterotetramer of 2 different alpha chains and 2 identical beta chains which form 2 alpha-beta heterodimers within the heterotetramer. The two alpha-beta heterodimers are rotated to an open configuration in contrast to the closed configuration found in other cryptophyte species due to the insertion of a single amino acid, 'Asp-65', in a conserved region of the alpha chain. In the open form, the central chromophores are not in physical contact but are separated by a water-filled channel. Contains three phycoerythrobilin chromophores and one 15,16-dihydrobiliverdin chromophore with binding of the phycoerythrobilin chromophores mediated by both the alpha and beta subunits.

It is found in the plastid. It localises to the chloroplast thylakoid membrane. Its function is as follows. Light-harvesting photosynthetic bile pigment-protein from the phycobiliprotein complex. The protein is Phycoerythrin beta subunit of Hemiselmis andersenii (Cryptophyte alga).